Reading from the N-terminus, the 254-residue chain is Mediator of RNA polymerase II transcription subunit 6 (254 aa).

The tract at residues 190–254 (PTFYQTKPGE…PPPEKRARVQ (65 aa)) is disordered. Over residues 227-245 (PPAPPAPPRPPPQTTPNKP) the composition is skewed to pro residues.

Belongs to the Mediator complex subunit 6 family. Component of the Mediator complex.

The protein localises to the nucleus. Functionally, component of the Mediator complex, a coactivator involved in the regulated transcription of nearly all RNA polymerase II-dependent genes. Mediator functions as a bridge to convey information from gene-specific regulatory proteins to the basal RNA polymerase II transcription machinery. Mediator is recruited to promoters by direct interactions with regulatory proteins and serves as a scaffold for the assembly of a functional preinitiation complex with RNA polymerase II and the general transcription factors. The sequence is that of Mediator of RNA polymerase II transcription subunit 6 (med6) from Danio rerio (Zebrafish).